Here is a 782-residue protein sequence, read N- to C-terminus: uncharacterized protein (782 aa).

A helical transmembrane segment spans residues 10–30 (LLTITIGAVAVSSILLGGIFY). Basic and acidic residues predominate over residues 57–76 (LDYQKARPSIKDSNLKEIPK). A disordered region spans residues 57–171 (LDYQKARPSI…PQPQQVPNNS (115 aa)). Pro residues predominate over residues 77 to 97 (PKPQPKPKPQPTPFPDPIPTP). Basic and acidic residues predominate over residues 98–124 (PKKEELKKPDIKPEEPKKPEIKPEPKP). Pro residues predominate over residues 125–135 (EPIPQPAPPIE).

This sequence to U.parvum UU046.

The protein resides in the membrane. This is an uncharacterized protein from Ureaplasma parvum serovar 3 (strain ATCC 700970).